A 388-amino-acid chain; its full sequence is Beta-1,4-galactosyltransferase 5 (388 aa).

Topologically, residues 1–14 (MRARRGLLRLPRRS) are cytoplasmic. Residues 15 to 35 (LLAALFFFSLSSSLLYFVYVA) traverse the membrane as a helical; Signal-anchor for type II membrane protein segment. Over 36-388 (PGIVNTYLFM…TPELAQVNEY (353 aa)) the chain is Lumenal. Asn77, Asn81, Asn90, Asn111, and Asn128 each carry an N-linked (GlcNAc...) asparagine glycan. The cysteines at positions 114 and 158 are disulfide-linked. UDP-alpha-D-galactose-binding positions include 169–173 (PFRNR), 208–210 (FNR), 235–236 (VD), Tyr264, and Trp296. Residues Cys229 and Cys248 are joined by a disulfide bond. Asp236 lines the Mn(2+) pocket. 298 to 301 (GEDD) lines the N-acetyl-D-glucosamine pocket. Position 329 (His329) interacts with Mn(2+). 329-330 (HH) contributes to the UDP-alpha-D-galactose binding site. Arg340 contacts N-acetyl-D-glucosamine. 2 N-linked (GlcNAc...) asparagine glycosylation sites follow: Asn364 and Asn373.

It belongs to the glycosyltransferase 7 family. It depends on Mn(2+) as a cofactor. As to expression, ubiquitously expressed.

It is found in the golgi apparatus. The protein localises to the golgi stack membrane. The enzyme catalyses a beta-D-glucosyl-(1&lt;-&gt;1')-N-acylsphing-4-enine + UDP-alpha-D-galactose = a beta-D-Gal-(1-&gt;4)-beta-D-Glc-(1&lt;-&gt;1)-Cer(d18:1(4E)) + UDP + H(+). The protein operates within protein modification; protein glycosylation. It participates in sphingolipid metabolism. Catalyzes the synthesis of lactosylceramide (LacCer) via the transfer of galactose from UDP-galactose to glucosylceramide (GlcCer). LacCer is the starting point in the biosynthesis of all gangliosides (membrane-bound glycosphingolipids) which play pivotal roles in the CNS including neuronal maturation and axonal and myelin formation. Plays a role in the glycosylation of BMPR1A and regulation of its protein stability. Essential for extraembryonic development during early embryogenesis. This is Beta-1,4-galactosyltransferase 5 from Homo sapiens (Human).